A 394-amino-acid chain; its full sequence is Argininosuccinate synthase (394 aa).

Position 8–16 (8–16) interacts with ATP; that stretch reads AYSGGLDTS. Y86 and S91 together coordinate L-citrulline. G116 is a binding site for ATP. L-aspartate is bound by residues T118, N122, and D123. Residue N122 participates in L-citrulline binding. L-citrulline is bound by residues R126, S172, S181, E257, and Y269.

The protein belongs to the argininosuccinate synthase family. Type 1 subfamily. In terms of assembly, homotetramer.

Its subcellular location is the cytoplasm. The catalysed reaction is L-citrulline + L-aspartate + ATP = 2-(N(omega)-L-arginino)succinate + AMP + diphosphate + H(+). It participates in amino-acid biosynthesis; L-arginine biosynthesis; L-arginine from L-ornithine and carbamoyl phosphate: step 2/3. The protein is Argininosuccinate synthase of Methanosarcina mazei (strain ATCC BAA-159 / DSM 3647 / Goe1 / Go1 / JCM 11833 / OCM 88) (Methanosarcina frisia).